The chain runs to 641 residues: uncharacterized protein (641 aa).

At Ser112 the chain carries Phosphoserine. Disordered regions lie at residues 118-243 (STSI…LDPT), 261-289 (KSPR…TVSI), 355-386 (DKSD…RLEA), and 404-430 (DGEG…QSHS). Residues 132–162 (ASVSSQYPHRTFQKQVNKTCVSKSDGPSGNG) are compositionally biased toward polar residues. Position 198 is a phosphoserine (Ser198). Composition is skewed to polar residues over residues 222–234 (NQEL…SRSN) and 278–289 (RQASSAGDTVSI). Over residues 355–368 (DKSDGDQREEDCVR) the composition is skewed to basic and acidic residues. Composition is skewed to low complexity over residues 374–383 (RSSSPTSPTR) and 421–430 (SSSAAVQSHS).

This is an uncharacterized protein from Mus musculus (Mouse).